A 521-amino-acid chain; its full sequence is Importin subunit alpha-4 (521 aa).

The segment at 1–29 (MAENPGLENHRIKSFKNKGRDVETMRRHR) is disordered. Ala2 carries the post-translational modification N-acetylalanine. The region spanning 2 to 58 (AENPGLENHRIKSFKNKGRDVETMRRHRNEVTVELRKNKRDEHLLKKRNVPQEESLE) is the IBB domain. Positions 18–29 (KGRDVETMRRHR) are enriched in basic and acidic residues. The Nuclear localization signal motif lies at 43–52 (EHLLKKRNVP). 2 positions are modified to phosphoserine: Ser56 and Ser60. The stretch at 66 to 106 (FKAQNVTLEAILQNATSDNPVVQLSAVQAARKLLSSDRNPP) is one ARM 1; truncated repeat. ARM repeat units lie at residues 107-149 (IDDL…TSAQ), 150-194 (TQAV…CRDY), 195-233 (VISL…NKDP), 234-278 (PPPM…EQIQ), 279-318 (MVID…TDEQ), 319-360 (TQVV…NQQQ), 361-400 (VQAV…ISGR), and 401-443 (KDQV…IMAG). Residues 137–229 (WALTNIASGT…VTWVIVNLCR (93 aa)) form an NLS binding site (major) region. Positions 306-394 (RAVGNIVTGT…QKEAAWAISN (89 aa)) are NLS binding site (minor). Residues 447-485 (STIAEIIEECGGLEKIEVLQQHENEDIYKLAFEIIDQYF) form an ARM 10; atypical repeat. Residue Tyr484 is modified to Phosphotyrosine.

It belongs to the importin alpha family. Forms a complex with importin subunit beta-1. Interacts with DDX21. Interacts with NCBP1, NCBP2/CBP20 and NCBP3. Interacts with RCC1. Interacts with ZC3H11A. In terms of tissue distribution, detected more or less in all tissues examined (Ehrlich ascites tumor cells, testis, kidney, spleen, liver, heart, lung, thymus, skeletal muscle, cerebellum and brain (without cerebellum)).

It localises to the cytoplasm. The protein localises to the nucleus. Functions in nuclear protein import as an adapter protein for nuclear receptor KPNB1. Binds specifically and directly to substrates containing either a simple or bipartite NLS motif. Docking of the importin/substrate complex to the nuclear pore complex (NPC) is mediated by KPNB1 through binding to nucleoporin FxFG repeats and the complex is subsequently translocated through the pore by an energy requiring, Ran-dependent mechanism. At the nucleoplasmic side of the NPC, Ran binds to importin-beta and the three components separate and importin-alpha and -beta are re-exported from the nucleus to the cytoplasm where GTP hydrolysis releases Ran from importin. The directionality of nuclear import is thought to be conferred by an asymmetric distribution of the GTP- and GDP-bound forms of Ran between the cytoplasm and nucleus. In vitro, mediates the nuclear import of human cytomegalovirus UL84 by recognizing a non-classical NLS. The polypeptide is Importin subunit alpha-4 (Kpna3) (Mus musculus (Mouse)).